The chain runs to 359 residues: tRNA N6-adenosine threonylcarbamoyltransferase (359 aa).

Fe cation-binding residues include histidine 115 and histidine 119. Residues 137–141, aspartate 170, glycine 183, and asparagine 283 contribute to the substrate site; that span reads LVSGG. Aspartate 311 contacts Fe cation. Residues 328 to 359 are disordered; it reads APDSLDIAPRSRWPLDEKSAPVFGTGRRGAKA.

The protein belongs to the KAE1 / TsaD family. Fe(2+) is required as a cofactor.

The protein resides in the cytoplasm. The catalysed reaction is L-threonylcarbamoyladenylate + adenosine(37) in tRNA = N(6)-L-threonylcarbamoyladenosine(37) in tRNA + AMP + H(+). Required for the formation of a threonylcarbamoyl group on adenosine at position 37 (t(6)A37) in tRNAs that read codons beginning with adenine. Is involved in the transfer of the threonylcarbamoyl moiety of threonylcarbamoyl-AMP (TC-AMP) to the N6 group of A37, together with TsaE and TsaB. TsaD likely plays a direct catalytic role in this reaction. The polypeptide is tRNA N6-adenosine threonylcarbamoyltransferase (Brucella melitensis biotype 2 (strain ATCC 23457)).